The following is a 422-amino-acid chain: L-threonine dehydratase biosynthetic IlvA (422 aa).

Lysine 56 bears the N6-(pyridoxal phosphate)lysine mark. Residues asparagine 83, 189-193 (GGGGL), and serine 315 contribute to the pyridoxal 5'-phosphate site. In terms of domain architecture, ACT-like spans 339–413 (HYFILNFPQR…FDPSNIYINE (75 aa)).

Belongs to the serine/threonine dehydratase family. As to quaternary structure, homotetramer. Pyridoxal 5'-phosphate serves as cofactor.

The enzyme catalyses L-threonine = 2-oxobutanoate + NH4(+). Its pathway is amino-acid biosynthesis; L-isoleucine biosynthesis; 2-oxobutanoate from L-threonine: step 1/1. Functionally, catalyzes the anaerobic formation of alpha-ketobutyrate and ammonia from threonine in a two-step reaction. The first step involved a dehydration of threonine and a production of enamine intermediates (aminocrotonate), which tautomerizes to its imine form (iminobutyrate). Both intermediates are unstable and short-lived. The second step is the nonenzymatic hydrolysis of the enamine/imine intermediates to form 2-ketobutyrate and free ammonia. In the low water environment of the cell, the second step is accelerated by RidA. The sequence is that of L-threonine dehydratase biosynthetic IlvA (ilvA) from Staphylococcus aureus (strain bovine RF122 / ET3-1).